Consider the following 230-residue polypeptide: Lipoprotein-releasing system ATP-binding protein LolD (230 aa).

An ABC transporter domain is found at Leu10–Leu228. Gly46 to Ser53 contacts ATP.

This sequence belongs to the ABC transporter superfamily. Lipoprotein translocase (TC 3.A.1.125) family. In terms of assembly, the complex is composed of two ATP-binding proteins (LolD) and two transmembrane proteins (LolC and LolE).

Its subcellular location is the cell inner membrane. Functionally, part of the ABC transporter complex LolCDE involved in the translocation of mature outer membrane-directed lipoproteins, from the inner membrane to the periplasmic chaperone, LolA. Responsible for the formation of the LolA-lipoprotein complex in an ATP-dependent manner. The protein is Lipoprotein-releasing system ATP-binding protein LolD of Bordetella avium (strain 197N).